A 383-amino-acid polypeptide reads, in one-letter code: MTSYESQGQSPTRCGPQFLSLGQEPPELSLYSDSYYPPPSLPSPQRTNPSSYELGDYAASSPNPYLWFNSPGMNSAPYLGGTPGPAGPSFVPQHYGMQRPYLGPGPPGGPGGELSWFSMPSQEDLMKLVRPPYSYSALIAMAIHGAPERRLTLSQIYQYVADNFPFYNKSKAGWQNSIRHNLSLNDCFKKVPRDEDDPGKGNYWTLDPNCEKMFDNGNFRRKRKRKSDSLPEKSSSGGNESGDSNGRGSPKSQSIDISTSPEKGPSPASTGPSPCLSNFLTEMSGVAAGSLDMEADPLSRPFTLSLPVDGAQRASQTTGFSTFTPSTTVSDWASPLPPPPPMSSSPSHSTLAYSGPVLSQFNGHFFPGLSSTGILYPREGTEV.

Residues Met1–Thr12 are compositionally biased toward polar residues. Disordered regions lie at residues Met1–Gly55, Asp215–Ser277, and Thr317–His348. The span at Pro25 to Tyr35 shows a compositional bias: low complexity. Residues Arg130–Lys224 constitute a DNA-binding region (fork-head). Positions Arg220–Lys226 match the Nuclear localization signal motif. Over residues Ser234–Ser249 the composition is skewed to low complexity. The span at Pro250–Ser277 shows a compositional bias: polar residues. The segment covering Thr317–Ser330 has biased composition (low complexity).

As to expression, expressed in ionocyte precursors.

Its subcellular location is the nucleus. Its function is as follows. Transcription factor required for epithelial cell differentiation. Involved in specification of skin ionocytes from epidermal precursors. The polypeptide is Forkhead box protein I3-B (Danio rerio (Zebrafish)).